The chain runs to 95 residues: Co-chaperonin GroES (95 aa).

The protein belongs to the GroES chaperonin family. Heptamer of 7 subunits arranged in a ring. Interacts with the chaperonin GroEL.

The protein localises to the cytoplasm. Its function is as follows. Together with the chaperonin GroEL, plays an essential role in assisting protein folding. The GroEL-GroES system forms a nano-cage that allows encapsulation of the non-native substrate proteins and provides a physical environment optimized to promote and accelerate protein folding. GroES binds to the apical surface of the GroEL ring, thereby capping the opening of the GroEL channel. This Deinococcus radiodurans (strain ATCC 13939 / DSM 20539 / JCM 16871 / CCUG 27074 / LMG 4051 / NBRC 15346 / NCIMB 9279 / VKM B-1422 / R1) protein is Co-chaperonin GroES.